Here is a 733-residue protein sequence, read N- to C-terminus: Protein psiM (733 aa).

The first 26 residues, 1 to 26, serve as a signal peptide directing secretion; it reads MKKINNNKIFVLFLTILLYLLNITTA. Asparagine 22, asparagine 65, and asparagine 96 each carry an N-linked (GlcNAc...) asparagine glycan. Residues 27-672 are Extracellular-facing; sequence QKPVSINIKI…VCQKAALVST (646 aa). One can recognise a PA14 domain in the interval 114–260; the sequence is NYDSDSGNYI…YDYCGVCNGD (147 aa). N-linked (GlcNAc...) asparagine glycosylation is found at asparagine 277, asparagine 336, asparagine 379, asparagine 428, asparagine 471, asparagine 537, asparagine 573, and asparagine 641. The chain crosses the membrane as a helical span at residues 673–693; sequence AVIASVVVVGAVVLGAAIFAG. Over 694-733 the chain is Cytoplasmic; the sequence is KKGYDAWKTSQGNVMAASQANPLYTQSSNGGENPLYNSPT.

The protein belongs to the prespore-cell-inducing factor family.

It localises to the membrane. This Dictyostelium discoideum (Social amoeba) protein is Protein psiM (psiM).